We begin with the raw amino-acid sequence, 122 residues long: Serum amyloid A-3 protein (122 aa).

An N-terminal signal peptide occupies residues methionine 1–serine 18. The interval alanine 100–tyrosine 122 is disordered.

This sequence belongs to the SAA family. As to expression, expressed by the liver; secreted in plasma.

The protein localises to the secreted. Its function is as follows. Major acute phase reactant. Apolipoprotein of the HDL complex. In vitro exhibits antimicrobial activity against Escherichia coli, Streptococcus uberis and Pseudomonas aeruginosa. The sequence is that of Serum amyloid A-3 protein (SAA3) from Mesocricetus auratus (Golden hamster).